Reading from the N-terminus, the 155-residue chain is DNA-directed RNA polymerases I, II, and III subunit RPABC2 (155 aa).

Residues 1-19 (MSDYEEAFNDGNENFEDFD) are compositionally biased toward acidic residues. Residues 1–57 (MSDYEEAFNDGNENFEDFDVEHFSDEETYEEKPQFKDGETTDANGKTIVTGGNGPED) are disordered. A compositionally biased stretch (basic and acidic residues) spans 20 to 39 (VEHFSDEETYEEKPQFKDGE). The residue at position 24 (serine 24) is a Phosphoserine. Positions 111–132 (LEGETDPLRIAMKELAEKKIPL) are leucine-zipper.

Belongs to the archaeal Rpo6/eukaryotic RPB6 RNA polymerase subunit family. In terms of assembly, component of the RNA polymerase I (Pol I), RNA polymerase II (Pol II) and RNA polymerase III (Pol III) complexes. Component of the RNA polymerase I (Pol I) complex consisting of 14 subunits: RPA135, RPA190, RPC40, RPA14, RPB5, RPO26, RPA43, RPB8, RPA12, RPB10, RPC19, RPC10, RPA49 and RPA34. The complex is composed of a horseshoe-shaped core containing ten subunits (RPA135, RPA190, RPB5, RPO26, RPB8, RPB10, RPC10, RPA12, RPC19 and RPC40) where RPA135 and RPA190 form the DNA-binding cleft. Outside of the core, RPA14 and RPA43 form the stalk that mediates interactions with transcription initiation factors and newly synthesized RNA. Component of the RNA polymerase II (Pol II) complex consisting of 12 subunits: RPO21, RPB2, RPB3, RPB4, RPB5, RPO26, RPB7, RPB8, RPB9, RPB10 and RPC10. Component of the RNA polymerase III (Pol III) complex consisting of 17 subunits.

The protein localises to the cytoplasm. It is found in the nucleus. DNA-dependent RNA polymerases catalyze the transcription of DNA into RNA using the four ribonucleoside triphosphates as substrates. Common component of RNA polymerases I, II and III which synthesize ribosomal RNA precursors, mRNA precursors and many functional non-coding RNAs, and small RNAs, such as 5S rRNA and tRNAs, respectively. Pol II is the central component of the basal RNA polymerase II transcription machinery. RNA polymerases are composed of mobile elements that move relative to each other. In Pol II, RPB6 is part of the clamp element and together with parts of RPB1 and RPB2 forms a pocket to which the RPB4-RPB7 subcomplex binds. This is DNA-directed RNA polymerases I, II, and III subunit RPABC2 (RPO26) from Saccharomyces cerevisiae (strain ATCC 204508 / S288c) (Baker's yeast).